Here is a 140-residue protein sequence, read N- to C-terminus: ATP synthase epsilon chain 1 (140 aa).

Belongs to the ATPase epsilon chain family. In terms of assembly, F-type ATPases have 2 components, CF(1) - the catalytic core - and CF(0) - the membrane proton channel. CF(1) has five subunits: alpha(3), beta(3), gamma(1), delta(1), epsilon(1). CF(0) has three main subunits: a, b and c.

The protein localises to the cell inner membrane. In terms of biological role, produces ATP from ADP in the presence of a proton gradient across the membrane. This is ATP synthase epsilon chain 1 from Photobacterium profundum (strain SS9).